The primary structure comprises 532 residues: L-proline--[L-prolyl-carrier protein] ligase (532 aa).

The segment at 510–532 (KTDYRRLGLDAPPRPAAPLGTAR) is disordered.

It belongs to the ATP-dependent AMP-binding enzyme family.

It carries out the reaction holo-[peptidyl-carrier protein] + L-proline + ATP = L-prolyl-[peptidyl-carrier protein] + AMP + diphosphate. Involved in the biosynthesis of undecylprodigiosin. Catalyzes the conversion of L-proline to L-prolyl-AMP and the transfer of the L-prolyl group to acyl carrier protein RedO. In Streptomyces coelicolor (strain ATCC BAA-471 / A3(2) / M145), this protein is L-proline--[L-prolyl-carrier protein] ligase.